Here is a 186-residue protein sequence, read N- to C-terminus: MAVIKLDEVNKNFVNEVIEAGKLVLGEDIVKSIKACYQCGTCTGSCPSGRRTAYRTRKVLRKVLLGLDDVLDSDDIWYCTTCYTCYERCPRDVKITEIIKTLRNIAAQKGNMALAHRKTASYVLRFGHAVPANNQIVELRGKLGLPAKSPTAQFSEKDLEEVRTLIKELKFDKLIAFDWEKMDLKE.

4Fe-4S ferredoxin-type domains follow at residues 26-56 (GEDI…AYRT) and 67-99 (LDDV…TEII). Residues C36, C39, C42, C46, C79, C82, C85, and C89 each coordinate [4Fe-4S] cluster.

Belongs to the HdrC family. As to quaternary structure, the heterodisulfide reductase is composed of three subunits; HdrA, HdrB and HdrC. The cofactor is [4Fe-4S] cluster.

Its pathway is cofactor metabolism; coenzyme M-coenzyme B heterodisulfide reduction; coenzyme B and coenzyme M from coenzyme M-coenzyme B heterodisulfide: step 1/1. In terms of biological role, part of a complex that catalyzes the reversible reduction of CoM-S-S-CoB to the thiol-coenzymes H-S-CoM (coenzyme M) and H-S-CoB (coenzyme B). The chain is CoB--CoM heterodisulfide reductase iron-sulfur subunit C 2 (hdrC2) from Methanocaldococcus jannaschii (strain ATCC 43067 / DSM 2661 / JAL-1 / JCM 10045 / NBRC 100440) (Methanococcus jannaschii).